Consider the following 267-residue polypeptide: Cell division protein FtsQ (267 aa).

The Cytoplasmic portion of the chain corresponds to 1–32; it reads MRKKTSSNKKNTAKKNNNISLHRKLGLIYKKT. The chain crosses the membrane as a helical span at residues 33–53; that stretch reads ILILKIVLIIFICLFAFTKYF. The Periplasmic segment spans residues 54 to 267; it reads ASLKSYLKTN…DKNKYYIEKY (214 aa). The POTRA domain occupies 73–141; the sequence is FKLENVIIEG…STIYIKLFER (69 aa).

The protein belongs to the FtsQ/DivIB family. FtsQ subfamily.

It is found in the cell inner membrane. Its function is as follows. Essential cell division protein. The protein is Cell division protein FtsQ of Rickettsia bellii (strain RML369-C).